The following is a 160-amino-acid chain: Endoribonuclease YbeY (160 aa).

The Zn(2+) site is built by His-121, His-125, and His-131.

The protein belongs to the endoribonuclease YbeY family. Requires Zn(2+) as cofactor.

The protein localises to the cytoplasm. Functionally, single strand-specific metallo-endoribonuclease involved in late-stage 70S ribosome quality control and in maturation of the 3' terminus of the 16S rRNA. In Hydrogenovibrio crunogenus (strain DSM 25203 / XCL-2) (Thiomicrospira crunogena), this protein is Endoribonuclease YbeY.